Reading from the N-terminus, the 279-residue chain is 4-hydroxy-3-methylbut-2-enyl diphosphate reductase (279 aa).

C12 serves as a coordination point for [4Fe-4S] cluster. (2E)-4-hydroxy-3-methylbut-2-enyl diphosphate contacts are provided by H42 and H74. Residues H42 and H74 each contribute to the dimethylallyl diphosphate site. Residues H42 and H74 each contribute to the isopentenyl diphosphate site. C96 lines the [4Fe-4S] cluster pocket. H124 provides a ligand contact to (2E)-4-hydroxy-3-methylbut-2-enyl diphosphate. Dimethylallyl diphosphate is bound at residue H124. Residue H124 participates in isopentenyl diphosphate binding. Residue E126 is the Proton donor of the active site. T162 is a (2E)-4-hydroxy-3-methylbut-2-enyl diphosphate binding site. C190 serves as a coordination point for [4Fe-4S] cluster. S218, S219, N220, and S263 together coordinate (2E)-4-hydroxy-3-methylbut-2-enyl diphosphate. Dimethylallyl diphosphate is bound by residues S218, S219, N220, and S263. Isopentenyl diphosphate is bound by residues S218, S219, N220, and S263.

This sequence belongs to the IspH family. It depends on [4Fe-4S] cluster as a cofactor.

It catalyses the reaction isopentenyl diphosphate + 2 oxidized [2Fe-2S]-[ferredoxin] + H2O = (2E)-4-hydroxy-3-methylbut-2-enyl diphosphate + 2 reduced [2Fe-2S]-[ferredoxin] + 2 H(+). It carries out the reaction dimethylallyl diphosphate + 2 oxidized [2Fe-2S]-[ferredoxin] + H2O = (2E)-4-hydroxy-3-methylbut-2-enyl diphosphate + 2 reduced [2Fe-2S]-[ferredoxin] + 2 H(+). It participates in isoprenoid biosynthesis; dimethylallyl diphosphate biosynthesis; dimethylallyl diphosphate from (2E)-4-hydroxy-3-methylbutenyl diphosphate: step 1/1. Its pathway is isoprenoid biosynthesis; isopentenyl diphosphate biosynthesis via DXP pathway; isopentenyl diphosphate from 1-deoxy-D-xylulose 5-phosphate: step 6/6. In terms of biological role, catalyzes the conversion of 1-hydroxy-2-methyl-2-(E)-butenyl 4-diphosphate (HMBPP) into a mixture of isopentenyl diphosphate (IPP) and dimethylallyl diphosphate (DMAPP). Acts in the terminal step of the DOXP/MEP pathway for isoprenoid precursor biosynthesis. The protein is 4-hydroxy-3-methylbut-2-enyl diphosphate reductase of Alkaliphilus oremlandii (strain OhILAs) (Clostridium oremlandii (strain OhILAs)).